A 939-amino-acid polypeptide reads, in one-letter code: Isoleucine--tRNA ligase (939 aa).

Positions P59–H69 match the 'HIGH' region motif. E570 contributes to the L-isoleucyl-5'-AMP binding site. Residues K611–S615 carry the 'KMSKS' region motif. Position 614 (K614) interacts with ATP. The Zn(2+) site is built by C902, C905, C922, and C925.

This sequence belongs to the class-I aminoacyl-tRNA synthetase family. IleS type 1 subfamily. Monomer. Zn(2+) is required as a cofactor.

Its subcellular location is the cytoplasm. The enzyme catalyses tRNA(Ile) + L-isoleucine + ATP = L-isoleucyl-tRNA(Ile) + AMP + diphosphate. Catalyzes the attachment of isoleucine to tRNA(Ile). As IleRS can inadvertently accommodate and process structurally similar amino acids such as valine, to avoid such errors it has two additional distinct tRNA(Ile)-dependent editing activities. One activity is designated as 'pretransfer' editing and involves the hydrolysis of activated Val-AMP. The other activity is designated 'posttransfer' editing and involves deacylation of mischarged Val-tRNA(Ile). In Nitrosomonas europaea (strain ATCC 19718 / CIP 103999 / KCTC 2705 / NBRC 14298), this protein is Isoleucine--tRNA ligase.